The chain runs to 315 residues: Voltage-dependent calcium channel gamma-3 subunit (315 aa).

4 helical membrane-spanning segments follow: residues 8–28 (IQML…TIAV), 104–124 (SSVF…CVAA), 135–155 (ILSA…GIIV), and 181–201 (FGAF…HIYI). The tract at residues 232–253 (RRRSSSRSTEPRSRDLSPISKG) is disordered. Position 248 is a phosphoserine (Ser-248).

Belongs to the PMP-22/EMP/MP20 family. CACNG subfamily. As to quaternary structure, the L-type calcium channel is composed of five subunits: alpha-1, alpha-2/delta, beta and gamma. Acts as an auxiliary subunit for AMPA-selective glutamate receptors (AMPARs). Found in a complex with GRIA1, GRIA2, GRIA3, GRIA4, CNIH2, CNIH3, CACNG2, CACNG4, CACNG5, CACNG7 and CACNG8. Interacts with AP4M1 and GRIA1; associates GRIA1 with the adaptor protein complex 4 (AP-4) to target GRIA1 to the somatodendritic compartment of neurons.

It is found in the membrane. Its function is as follows. Regulates the trafficking to the somatodendritic compartment and gating properties of AMPA-selective glutamate receptors (AMPARs). Promotes their targeting to the cell membrane and synapses and modulates their gating properties by slowing their rates of activation, deactivation and desensitization. Does not show subunit-specific AMPA receptor regulation and regulates all AMPAR subunits. Thought to stabilize the calcium channel in an inactivated (closed) state. This is Voltage-dependent calcium channel gamma-3 subunit (Cacng3) from Mus musculus (Mouse).